The chain runs to 1370 residues: DNA-directed RNA polymerase subunit beta (1370 aa).

Belongs to the RNA polymerase beta chain family. As to quaternary structure, the RNAP catalytic core consists of 2 alpha, 1 beta, 1 beta' and 1 omega subunit. When a sigma factor is associated with the core the holoenzyme is formed, which can initiate transcription.

It catalyses the reaction RNA(n) + a ribonucleoside 5'-triphosphate = RNA(n+1) + diphosphate. Its function is as follows. DNA-dependent RNA polymerase catalyzes the transcription of DNA into RNA using the four ribonucleoside triphosphates as substrates. In Bordetella parapertussis (strain 12822 / ATCC BAA-587 / NCTC 13253), this protein is DNA-directed RNA polymerase subunit beta.